Consider the following 869-residue polypeptide: Valine--tRNA ligase (869 aa).

A 'HIGH' region motif is present at residues 47 to 57 (PYPTGNFHIGN). Positions 521 to 525 (KMSKS) match the 'KMSKS' region motif. Lysine 524 is a binding site for ATP.

Belongs to the class-I aminoacyl-tRNA synthetase family. ValS type 2 subfamily.

The protein resides in the cytoplasm. The enzyme catalyses tRNA(Val) + L-valine + ATP = L-valyl-tRNA(Val) + AMP + diphosphate. In terms of biological role, catalyzes the attachment of valine to tRNA(Val). As ValRS can inadvertently accommodate and process structurally similar amino acids such as threonine, to avoid such errors, it has a 'posttransfer' editing activity that hydrolyzes mischarged Thr-tRNA(Val) in a tRNA-dependent manner. The polypeptide is Valine--tRNA ligase (Methanosarcina mazei (strain ATCC BAA-159 / DSM 3647 / Goe1 / Go1 / JCM 11833 / OCM 88) (Methanosarcina frisia)).